We begin with the raw amino-acid sequence, 68 residues long: Large ribosomal subunit protein bL31 (68 aa).

Zn(2+)-binding residues include Cys-16, Cys-18, Cys-37, and Cys-40.

Belongs to the bacterial ribosomal protein bL31 family. Type A subfamily. Part of the 50S ribosomal subunit. The cofactor is Zn(2+).

Its function is as follows. Binds the 23S rRNA. The sequence is that of Large ribosomal subunit protein bL31 from Aquifex aeolicus (strain VF5).